Reading from the N-terminus, the 277-residue chain is S-formylglutathione hydrolase FrmB (277 aa).

Catalysis depends on charge relay system residues Ser145, Asp221, and His254.

It belongs to the esterase D family.

It catalyses the reaction S-formylglutathione + H2O = formate + glutathione + H(+). Functionally, serine hydrolase involved in the detoxification of formaldehyde. Hydrolyzes S-formylglutathione to glutathione and formate. In Escherichia coli (strain K12 / DH10B), this protein is S-formylglutathione hydrolase FrmB (frmB).